Here is a 602-residue protein sequence, read N- to C-terminus: Histone-arginine methyltransferase CARM1 (602 aa).

In terms of domain architecture, SAM-dependent MTase PRMT-type spans 117–424 (AVQYFQFYGY…KKQSYDISIV (308 aa)). The S-adenosyl-L-methionine site is built by Gln-130, Arg-139, Gly-163, Glu-185, Glu-214, and Ser-242. Residues 470–602 (TGGAYTMNTG…ITTNTMHYGS (133 aa)) form a transactivation domain region.

The protein belongs to the class I-like SAM-binding methyltransferase superfamily. Protein arginine N-methyltransferase family. Homodimer.

It localises to the nucleus. It is found in the cytoplasm. The protein localises to the chromosome. It carries out the reaction L-arginyl-[protein] + 2 S-adenosyl-L-methionine = N(omega),N(omega)-dimethyl-L-arginyl-[protein] + 2 S-adenosyl-L-homocysteine + 2 H(+). Methylates (mono- and asymmetric dimethylation) the guanidino nitrogens of arginyl residues in several proteins involved in DNA packaging, transcription regulation, pre-mRNA splicing, and mRNA stability. Recruited to promoters upon gene activation together with histone acetyltransferases from EP300/P300 and p160 families, methylates histone H3 at 'Arg-17' (H3R17me) and activates transcription via chromatin remodeling. The chain is Histone-arginine methyltransferase CARM1 (carm1) from Xenopus laevis (African clawed frog).